The following is a 206-amino-acid chain: Probable N-acetyltransferase 14 (206 aa).

The region spanning 55–206 is the N-acetyltransferase domain; sequence LRFVLASFAL…TLVREFSKEL (152 aa). A helical membrane pass occupies residues 57–77; the sequence is FVLASFALALLLPVFLAVAAM.

Belongs to the camello family.

The protein localises to the membrane. Functionally, probable acetyltransferase. May act as a transcription factor regulating the expression of coproporphyrinogen oxidase by binding to a promoter regulatory element. The polypeptide is Probable N-acetyltransferase 14 (Bos taurus (Bovine)).